We begin with the raw amino-acid sequence, 582 residues long: Threonine--tRNA ligase (582 aa).

The segment at 185–478 is catalytic; that stretch reads DHRKLGKELD…LVEHYGGAFP (294 aa). The Zn(2+) site is built by cysteine 278, histidine 329, and histidine 455.

The protein belongs to the class-II aminoacyl-tRNA synthetase family. In terms of assembly, homodimer. Zn(2+) is required as a cofactor.

Its subcellular location is the cytoplasm. It carries out the reaction tRNA(Thr) + L-threonine + ATP = L-threonyl-tRNA(Thr) + AMP + diphosphate + H(+). In terms of biological role, catalyzes the attachment of threonine to tRNA(Thr) in a two-step reaction: L-threonine is first activated by ATP to form Thr-AMP and then transferred to the acceptor end of tRNA(Thr). Also edits incorrectly charged L-seryl-tRNA(Thr). The protein is Threonine--tRNA ligase of Borrelia garinii subsp. bavariensis (strain ATCC BAA-2496 / DSM 23469 / PBi) (Borreliella bavariensis).